The sequence spans 301 residues: Ribosomal RNA small subunit methyltransferase H (301 aa).

Residues 33-35, D52, F79, D100, and Q107 each bind S-adenosyl-L-methionine; that span reads GGH.

The protein belongs to the methyltransferase superfamily. RsmH family.

Its subcellular location is the cytoplasm. It carries out the reaction cytidine(1402) in 16S rRNA + S-adenosyl-L-methionine = N(4)-methylcytidine(1402) in 16S rRNA + S-adenosyl-L-homocysteine + H(+). Its function is as follows. Specifically methylates the N4 position of cytidine in position 1402 (C1402) of 16S rRNA. The chain is Ribosomal RNA small subunit methyltransferase H from Mycoplasmopsis synoviae (strain 53) (Mycoplasma synoviae).